A 67-amino-acid chain; its full sequence is Protein AaeX (67 aa).

A run of 2 helical transmembrane segments spans residues 3 to 23 and 43 to 63; these read LFPV…ELLL and FVWH…YLIS.

This sequence belongs to the AaeX family.

The protein resides in the cell membrane. The sequence is that of Protein AaeX from Escherichia coli (strain K12 / DH10B).